Consider the following 553-residue polypeptide: Hydroxylamine reductase (553 aa).

[2Fe-2S] cluster is bound by residues Cys-3, Cys-6, Cys-18, and Cys-25. Hybrid [4Fe-2O-2S] cluster is bound by residues His-252, Glu-276, Cys-320, Cys-408, Cys-436, Cys-461, Glu-495, and Lys-497. At Cys-408 the chain carries Cysteine persulfide.

This sequence belongs to the HCP family. It depends on [2Fe-2S] cluster as a cofactor. Hybrid [4Fe-2O-2S] cluster is required as a cofactor.

The protein resides in the cytoplasm. The enzyme catalyses A + NH4(+) + H2O = hydroxylamine + AH2 + H(+). Functionally, catalyzes the reduction of hydroxylamine to form NH(3) and H(2)O. This chain is Hydroxylamine reductase, found in Aliivibrio fischeri (strain ATCC 700601 / ES114) (Vibrio fischeri).